We begin with the raw amino-acid sequence, 334 residues long: Holliday junction branch migration complex subunit RuvB (334 aa).

The tract at residues 1-182 is large ATPase domain (RuvB-L); that stretch reads MDERLVSTEA…FGVHARLEYY (182 aa). Residues leucine 21, arginine 22, glycine 63, lysine 66, threonine 67, threonine 68, 129–131, arginine 172, tyrosine 182, and arginine 219 contribute to the ATP site; that span reads EDF. Threonine 67 is a Mg(2+) binding site. The small ATPAse domain (RuvB-S) stretch occupies residues 183-253; sequence EQRDLAHIVS…IAEDALERLQ (71 aa). Residues 256–334 are head domain (RuvB-H); sequence KLGLDHIDHK…HFQMEVPIRD (79 aa). DNA-binding residues include arginine 311 and arginine 316.

This sequence belongs to the RuvB family. In terms of assembly, homohexamer. Forms an RuvA(8)-RuvB(12)-Holliday junction (HJ) complex. HJ DNA is sandwiched between 2 RuvA tetramers; dsDNA enters through RuvA and exits via RuvB. An RuvB hexamer assembles on each DNA strand where it exits the tetramer. Each RuvB hexamer is contacted by two RuvA subunits (via domain III) on 2 adjacent RuvB subunits; this complex drives branch migration. In the full resolvosome a probable DNA-RuvA(4)-RuvB(12)-RuvC(2) complex forms which resolves the HJ.

The protein resides in the cytoplasm. The catalysed reaction is ATP + H2O = ADP + phosphate + H(+). Functionally, the RuvA-RuvB-RuvC complex processes Holliday junction (HJ) DNA during genetic recombination and DNA repair, while the RuvA-RuvB complex plays an important role in the rescue of blocked DNA replication forks via replication fork reversal (RFR). RuvA specifically binds to HJ cruciform DNA, conferring on it an open structure. The RuvB hexamer acts as an ATP-dependent pump, pulling dsDNA into and through the RuvAB complex. RuvB forms 2 homohexamers on either side of HJ DNA bound by 1 or 2 RuvA tetramers; 4 subunits per hexamer contact DNA at a time. Coordinated motions by a converter formed by DNA-disengaged RuvB subunits stimulates ATP hydrolysis and nucleotide exchange. Immobilization of the converter enables RuvB to convert the ATP-contained energy into a lever motion, pulling 2 nucleotides of DNA out of the RuvA tetramer per ATP hydrolyzed, thus driving DNA branch migration. The RuvB motors rotate together with the DNA substrate, which together with the progressing nucleotide cycle form the mechanistic basis for DNA recombination by continuous HJ branch migration. Branch migration allows RuvC to scan DNA until it finds its consensus sequence, where it cleaves and resolves cruciform DNA. This is Holliday junction branch migration complex subunit RuvB from Bacillus pumilus (strain SAFR-032).